The primary structure comprises 245 residues: Cysteine-rich secretory protein 3 (245 aa).

A signal peptide spans 1-20 (MTLFPVLLFLVAGLLPSFPA). The SCP domain occupies 43-171 (VNKHNELRRA…VLKYYYVCQY (129 aa)). Cystine bridges form between cysteine 191/cysteine 198, cysteine 194/cysteine 203, cysteine 207/cysteine 240, cysteine 216/cysteine 234, and cysteine 225/cysteine 238. A ShKT domain is found at 207–240 (CKYEDLYSNCKSLKLTLTCKHQLVRDSCKASCNC). N-linked (GlcNAc...) asparagine glycosylation is present at asparagine 239.

It belongs to the CRISP family. As to quaternary structure, interacts with A1BG. As to expression, salivary gland, pancreas and prostate &gt; epididymis, ovary, thymus and colon.

It localises to the secreted. In Homo sapiens (Human), this protein is Cysteine-rich secretory protein 3 (CRISP3).